Reading from the N-terminus, the 431-residue chain is MAEGYREYRDKVLGFIEDHENWRKHTINLIASENVTSPSVTRAVASGFMHKYAEGWPKQRYYQGCKYVDEVELIGVELFTKLFGSDFADLRPISGTNANQAVFFGLTQPGDKAIVLHTSHGGHISHMPFGAAGMRGLEVHTWPFDNEEFNIDVDKAEKLIREVEPKIVVFGGSLFPFPHPVKELAPVAKEVGAYVMYDGAHVLGLIAGKQFQDPLREGADIITASTHKTFPGPQGGVIIYKRFGETEEIAKLQWAIFPGVLSNHHLHHMAGKVITAAEMLEYGEKYAAQIVKNAKALAEALAEEGFKVIGEDKGYTESHQVIVDVSDLHPAAGGWAAPLLEEAGIILNKNLLPWDPLEKVNEPSGLRIGVQEMTRVGMMEDEMKEIARFIRRVLIDKEDPAKVRRDVYGFRAEYQKVYYSFDHGLPLRLRE.

122–124 (GHI) contributes to the (6S)-5,6,7,8-tetrahydrofolate binding site. The residue at position 228 (K228) is an N6-(pyridoxal phosphate)lysine. (6S)-5,6,7,8-tetrahydrofolate is bound at residue E245.

It belongs to the SHMT family. Homodimer. Pyridoxal 5'-phosphate serves as cofactor.

It localises to the cytoplasm. Its pathway is amino-acid biosynthesis; glycine biosynthesis; glycine from L-serine: step 1/1. Its function is as follows. Catalyzes the reversible interconversion of serine and glycine with a modified folate serving as the one-carbon carrier. Also exhibits a pteridine-independent aldolase activity toward beta-hydroxyamino acids, producing glycine and aldehydes, via a retro-aldol mechanism. This is Serine hydroxymethyltransferase from Thermococcus kodakarensis (strain ATCC BAA-918 / JCM 12380 / KOD1) (Pyrococcus kodakaraensis (strain KOD1)).